Reading from the N-terminus, the 239-residue chain is Ribonuclease PH (239 aa).

Phosphate contacts are provided by residues Arg-88 and 126–128 (GTR).

Belongs to the RNase PH family. As to quaternary structure, homohexameric ring arranged as a trimer of dimers.

It carries out the reaction tRNA(n+1) + phosphate = tRNA(n) + a ribonucleoside 5'-diphosphate. Its function is as follows. Phosphorolytic 3'-5' exoribonuclease that plays an important role in tRNA 3'-end maturation. Removes nucleotide residues following the 3'-CCA terminus of tRNAs; can also add nucleotides to the ends of RNA molecules by using nucleoside diphosphates as substrates, but this may not be physiologically important. Probably plays a role in initiation of 16S rRNA degradation (leading to ribosome degradation) during starvation. The polypeptide is Ribonuclease PH (Coxiella burnetii (strain Dugway 5J108-111)).